Here is an 87-residue protein sequence, read N- to C-terminus: Kawaguchipeptin peptide (87 aa).

The propeptide occupies 1–33 (MKNPTLLPKLTAPVERPAVTSSDLKQASSVDAA). Residue W34 is the site of 3'-prenyl-2',N2-cyclotryptophan; partial attachment. The cyclopeptide (Trp-Pro) cross-link spans 34–44 (WLNGDNNWSTP). D-leucine; partial is present on L35. W41 carries 3'-prenyl-2',N2-cyclotryptophan; partial lipidation. A propeptide spanning residues 45–51 (FAGVNAA) is cleaved from the precursor. W52 carries the 3'-prenyl-2',N2-cyclotryptophan; partial lipid modification. The cyclopeptide (Trp-Pro) cross-link spans 52–62 (WLNGDNNWSTP). L53 is modified (D-leucine; partial). Residue W59 is the site of 3'-prenyl-2',N2-cyclotryptophan; partial attachment. A propeptide spanning residues 63 to 69 (FAGVNAA) is cleaved from the precursor. W70 is lipidated: 3'-prenyl-2',N2-cyclotryptophan; partial. Positions 70-80 (WLNGDNNWSTP) form a cross-link, cyclopeptide (Trp-Pro). The residue at position 71 (L71) is a D-leucine; partial. Residue W77 is the site of 3'-prenyl-2',N2-cyclotryptophan; partial attachment. Positions 81-87 (FAADGAE) are excised as a propeptide.

Post-translationally, kawaguchipeptin A contains a D-Leu and 2 prenylated Trp, whereas kawaguchipeptin B only contains unmodified amino acids. Kawaguchipeptin A is prenylated in vivo. Upon expression in E.coli of the whole operon, Trp residues are prenylated by C-prenyltransferase KgpF. Prenylation by KgpF is likely the last enzymatic step in the biosynthetic maturation of kawaguchipeptin A.

Both kawaguchipeptin A and B, which only differ by post-translational modifications, have antibacterial activities, since they inhibit the growth of the Gram-positive bacterium S.aureus at a concentration of 1 ug/mL. The polypeptide is Kawaguchipeptin peptide (Microcystis aeruginosa (strain NIES-88 / KW-MA1-3)).